A 314-amino-acid chain; its full sequence is Glutathione synthetase (314 aa).

One can recognise an ATP-grasp domain in the interval 125-311 (EKIAAQLFPQ…IAGQLFDAIE (187 aa)). 151 to 208 (FVQKQEQAILKPLDGMGGHSIFRSSNGDPNLNVILETLTDGGRTLAIAQRYLQQIIEG) is a binding site for ATP. Mg(2+) contacts are provided by glutamate 282 and asparagine 284.

Belongs to the prokaryotic GSH synthase family. Mg(2+) is required as a cofactor. Mn(2+) serves as cofactor.

The enzyme catalyses gamma-L-glutamyl-L-cysteine + glycine + ATP = glutathione + ADP + phosphate + H(+). It functions in the pathway sulfur metabolism; glutathione biosynthesis; glutathione from L-cysteine and L-glutamate: step 2/2. This is Glutathione synthetase from Xylella fastidiosa (strain Temecula1 / ATCC 700964).